Consider the following 211-residue polypeptide: Arginine exporter protein ArgO (211 aa).

Transmembrane regions (helical) follow at residues 1-21 (MFSY…PLGP), 37-57 (IMIA…GIFG), 68-88 (LLAL…FGAF), 111-131 (IIAT…DTFV), 147-167 (WFAL…AILA), and 182-202 (IINL…ARDG).

This sequence belongs to the LysE/ArgO transporter (TC 2.A.75) family.

The protein resides in the cell inner membrane. It catalyses the reaction L-arginine(in) = L-arginine(out). In terms of biological role, involved in the export of arginine. Important to control the intracellular level of arginine and the correct balance between arginine and lysine. The chain is Arginine exporter protein ArgO from Escherichia coli O157:H7.